Consider the following 196-residue polypeptide: Histone H1.0 (196 aa).

2 disordered regions span residues 1-29 and 78-196; these read MTEN…PKYS and SGTL…GRKK. The H15 domain maps to 24-97; the sequence is DHPKYSDMIL…GASGSFRLAK (74 aa). A compositionally biased stretch (basic residues) spans 104–196; that stretch reads PAKKPKKEIK…ASPKKSGRKK (93 aa).

The protein belongs to the histone H1/H5 family.

The protein localises to the nucleus. It is found in the chromosome. Functionally, histones H1 are necessary for the condensation of nucleosome chains into higher-order structures. The histones H1.0 are found in cells that are in terminal stages of differentiation or that have low rates of cell division. The protein is Histone H1.0 (h1-0) of Xenopus tropicalis (Western clawed frog).